Reading from the N-terminus, the 223-residue chain is Germin-like protein 1-3 (223 aa).

An N-terminal signal peptide occupies residues 1-22 (MAKLILATFAVVFMALAATSLA). An intrachain disulfide couples Cys32 to Cys50. N-linked (GlcNAc...) asparagine glycosylation occurs at Asn55. Residues 64 to 212 (DGLMKAGNTG…AFQVDGGMVE (149 aa)) enclose the Cupin type-1 domain. 4 residues coordinate Mn(2+): His112, His114, Glu119, and His158.

This sequence belongs to the germin family. In terms of assembly, oligomer (believed to be a pentamer but probably hexamer).

It localises to the secreted. The protein localises to the extracellular space. The protein resides in the apoplast. In terms of biological role, may play a role in plant defense. Probably has no oxalate oxidase activity even if the active site is conserved. The chain is Germin-like protein 1-3 (GER8) from Oryza sativa subsp. japonica (Rice).